Consider the following 317-residue polypeptide: tRNA pseudouridine synthase B (317 aa).

Catalysis depends on D47, which acts as the Nucleophile.

This sequence belongs to the pseudouridine synthase TruB family. Type 1 subfamily.

The catalysed reaction is uridine(55) in tRNA = pseudouridine(55) in tRNA. In terms of biological role, responsible for synthesis of pseudouridine from uracil-55 in the psi GC loop of transfer RNAs. The polypeptide is tRNA pseudouridine synthase B (Shewanella denitrificans (strain OS217 / ATCC BAA-1090 / DSM 15013)).